Here is a 110-residue protein sequence, read N- to C-terminus: Ig kappa chain V region 2717 (110 aa).

A framework-1 region spans residues 1–23 (VEVLTQTPSPVSAAVGGTVTISC). The complementarity-determining-1 stretch occupies residues 24–36 (QSTKSIYBBBYLA). The segment at 37–51 (WYQZKPGQPPKALIY) is framework-2. A complementarity-determining-2 region spans residues 52-58 (TASSLAS). Residues 59–90 (GVPSRFTGSGSGTZFTLTLSDVZCDDAATYYC) are framework-3. The segment at 91 to 99 (GGADYTGYS) is complementarity-determining-3. The segment at 100–109 (FGGGTEVVVK) is framework-4.

In Oryctolagus cuniculus (Rabbit), this protein is Ig kappa chain V region 2717.